We begin with the raw amino-acid sequence, 118 residues long: Thioredoxin-like protein CXXS1 (118 aa).

The 109-residue stretch at 2–110 (ARVVKIDSAE…IKKRVDGFVQ (109 aa)) folds into the Thioredoxin domain.

It belongs to the thioredoxin family. In terms of tissue distribution, ubiquitous.

The protein resides in the cytoplasm. Its function is as follows. Possesses low disulfide reductase activity, but efficient protein disulfide isomerase activity. Does not possess deglutathionylation activity. The protein is Thioredoxin-like protein CXXS1 (CXXS1) of Arabidopsis thaliana (Mouse-ear cress).